The sequence spans 447 residues: Elongation factor 1-alpha (447 aa).

Residues 5–230 enclose the tr-type G domain; it reads KIHISIVVIG…DQINEPKRPS (226 aa). Residues 14–21 are G1; the sequence is GHVDSGKS. 14–21 lines the GTP pocket; it reads GHVDSGKS. N6,N6-dimethyllysine is present on K55. Residues 70 to 74 are G2; the sequence is GITID. N6,N6,N6-trimethyllysine is present on K79. The tract at residues 91–94 is G3; sequence DAPG. Residues 91–95 and 153–156 contribute to the GTP site; these read DAPGH and NKMD. The G4 stretch occupies residues 153–156; it reads NKMD. K187 bears the N6,N6,N6-trimethyllysine mark. Positions 194-196 are G5; the sequence is SGF. At K261 the chain carries N6-methyllysine. At E289 the chain carries 5-glutamyl glycerylphosphorylethanolamine. The residue at position 306 (K306) is an N6,N6,N6-trimethyllysine. 5-glutamyl glycerylphosphorylethanolamine is present on E362. K396 bears the N6,N6,N6-trimethyllysine mark.

It belongs to the TRAFAC class translation factor GTPase superfamily. Classic translation factor GTPase family. EF-Tu/EF-1A subfamily.

The protein resides in the cytoplasm. Its function is as follows. This protein promotes the GTP-dependent binding of aminoacyl-tRNA to the A-site of ribosomes during protein biosynthesis. This is Elongation factor 1-alpha (BLT63) from Hordeum vulgare (Barley).